Reading from the N-terminus, the 386-residue chain is Cytotoxic granule associated RNA binding protein TIA1 (386 aa).

An N-acetylmethionine modification is found at Met-1. RRM domains follow at residues 7 to 83 (KTLY…WATT), 106 to 184 (FHVF…WATR), and 214 to 286 (CTVY…WGKE). The tract at residues 355–376 (GPNYSVPPPQGQNGSMLPSQPA) is disordered.

In terms of assembly, homooligomer; homooligomerization is induced by Zn(2+). Interacts with FASTK; the interactions leads to its phosphorylation. Interacts (via RRM1 and the C-terminal glutamine-rich (Q) sequence) with SNRPC/U1-C (via N-terminus); thereby facilitating spliceosomal U1 snRNP recruitment to 5' splice sites. Post-translationally, phosphorylatedby FASTK; phosphorylation occurs after FAS ligation in FAS-mediated apoptosis and before DNA fragmentation.

The protein localises to the nucleus. It is found in the cytoplasm. The protein resides in the stress granule. RNA-binding protein involved in the regulation of alternative pre-RNA splicing and mRNA translation by binding to uridine-rich (U-rich) RNA sequences. Binds to U-rich sequences immediately downstream from a 5' splice sites in a uridine-rich small nuclear ribonucleoprotein (U snRNP)-dependent fashion, thereby modulating alternative pre-RNA splicing. Preferably binds to the U-rich IAS1 sequence in a U1 snRNP-dependent manner; this binding is optimal if a 5' splice site is adjacent to IAS1. Activates the use of heterologous 5' splice sites; the activation depends on the intron sequence downstream from the 5' splice site, with a preference for a downstream U-rich sequence. By interacting with SNRPC/U1-C, promotes recruitment and binding of spliceosomal U1 snRNP to 5' splice sites followed by U-rich sequences, thereby facilitating atypical 5' splice site recognition by U1 snRNP. Activates splicing of alternative exons with weak 5' splice sites followed by a U-rich stretch on its own pre-mRNA and on TIAR mRNA. Acts as a modulator of alternative splicing for the apoptotic FAS receptor, thereby promoting apoptosis. Binds to the 5' splice site region of FAS intron 5 to promote accumulation of transcripts that include exon 6 at the expense of transcripts in which exon 6 is skipped, thereby leading to the transcription of a membrane-bound apoptotic FAS receptor, which promotes apoptosis. Binds to a conserved AU-rich cis element in COL2A1 intron 2 and modulates alternative splicing of COL2A1 exon 2. Also binds to the equivalent AT-rich element in COL2A1 genomic DNA, and may thereby be involved in the regulation of transcription. Involved in the repression of mRNA translation by binding to AU-rich elements (AREs) located in mRNA 3' untranslated regions (3' UTRs), including target ARE-bearing mRNAs encoding TNF and PTGS2. Also participates in the cellular response to environmental stress, by acting downstream of the stress-induced phosphorylation of EIF2S1/EIF2A to promote the recruitment of untranslated mRNAs to cytoplasmic stress granules (SGs), leading to stress-induced translational arrest. Formation and recruitment to SGs is regulated by Zn(2+). Possesses nucleolytic activity against cytotoxic lymphocyte target cells. This is Cytotoxic granule associated RNA binding protein TIA1 (Tia1) from Mus musculus (Mouse).